Consider the following 264-residue polypeptide: Matrilysin (264 aa).

The first 17 residues, 1-17 (MQLTLFCFVCLLPGHLA), serve as a signal peptide directing secretion. Residues 18 to 94 (LPLSQEAGDV…PRCGVPDVAE (77 aa)) constitute a propeptide, activation peptide. The short motif at 85–92 (PRCGVPDV) is the Cysteine switch element. Cysteine 87 serves as a coordination point for Zn(2+). Ca(2+) is bound at residue aspartate 153. Histidine 163 and aspartate 165 together coordinate Zn(2+). Ca(2+)-binding residues include aspartate 170, glycine 171, glycine 173, and threonine 175. Histidine 178 contacts Zn(2+). Residues glycine 185, glycine 187, and aspartate 189 each coordinate Ca(2+). Histidine 191 contacts Zn(2+). Ca(2+) is bound by residues aspartate 193 and glutamate 196. Residue histidine 214 coordinates Zn(2+). The active site involves glutamate 215. Residues histidine 218 and histidine 224 each contribute to the Zn(2+) site.

The protein belongs to the peptidase M10A family. The cofactor is Ca(2+). It depends on Zn(2+) as a cofactor. Expressed in the intestinal epithelium (at protein level).

The protein resides in the secreted. Its subcellular location is the extracellular space. The protein localises to the extracellular matrix. The catalysed reaction is Cleavage of 14-Ala-|-Leu-15 and 16-Tyr-|-Leu-17 in B chain of insulin. No action on collagen types I, II, IV, V. Cleaves gelatin chain alpha2(I) &gt; alpha1(I).. Degrades casein, gelatins of types I, III, IV, and V, and fibronectin. Activates procollagenase. Functionally, may play a role in tissue reorganization. This Mus musculus (Mouse) protein is Matrilysin (Mmp7).